Here is a 291-residue protein sequence, read N- to C-terminus: MHGILSIQSHVTYGHAGNSSAIFPMQRMGFEVWPIHTVQFSNHTQYKQGWTGRAFSASDIDELVQGLDNIDALKRCKAILTGYQGSAEQCEAIIRTVEKVKAQNPSSLYICDPVMGAPDKGCIVAPGITEYLVDHLMPMADVIVPNQFELSQFAQMEINTLSDAVEACNIALAKGPKVVLVKHLYCVSDDKFSMLLATPEGCFLAQRPHLTFAQQPVGVGDLISSLFTAGLLKGYSTMRAFQHCHDACYGVLKQTHQLNEWELQTILAQNELVEPSETFPIERLNLNLKTA.

Substrate-binding positions include serine 9 and 44–45; that span reads TQ. Residues aspartate 112, valine 144, glutamate 149, lysine 182, and 207–210 contribute to the ATP site; that span reads RPHL. Position 221 (aspartate 221) interacts with substrate.

The protein belongs to the pyridoxine kinase family. PdxY subfamily. In terms of assembly, homodimer. Mg(2+) is required as a cofactor.

It carries out the reaction pyridoxal + ATP = pyridoxal 5'-phosphate + ADP + H(+). Its pathway is cofactor metabolism; pyridoxal 5'-phosphate salvage; pyridoxal 5'-phosphate from pyridoxal: step 1/1. In terms of biological role, pyridoxal kinase involved in the salvage pathway of pyridoxal 5'-phosphate (PLP). Catalyzes the phosphorylation of pyridoxal to PLP. The polypeptide is Pyridoxal kinase PdxY (Photobacterium profundum (strain SS9)).